The primary structure comprises 314 residues: tRNA dimethylallyltransferase (314 aa).

12 to 19 (GPTAAGKS) contacts ATP. 14 to 19 (TAAGKS) serves as a coordination point for substrate. Interaction with substrate tRNA stretches follow at residues 37 to 40 (DSAT), 161 to 165 (QRIQR), and 245 to 250 (RCVGYR).

The protein belongs to the IPP transferase family. In terms of assembly, monomer. Mg(2+) serves as cofactor.

The enzyme catalyses adenosine(37) in tRNA + dimethylallyl diphosphate = N(6)-dimethylallyladenosine(37) in tRNA + diphosphate. In terms of biological role, catalyzes the transfer of a dimethylallyl group onto the adenine at position 37 in tRNAs that read codons beginning with uridine, leading to the formation of N6-(dimethylallyl)adenosine (i(6)A). The polypeptide is tRNA dimethylallyltransferase (Bordetella petrii (strain ATCC BAA-461 / DSM 12804 / CCUG 43448)).